The primary structure comprises 26 residues: Acyl carrier protein (26 aa).

Positions 2–26 (SDIEQRIKQAVAEQLGMRAEEIKNE) constitute a Carrier domain.

The protein belongs to the acyl carrier protein (ACP) family. Post-translationally, 4'-phosphopantetheine is transferred from CoA to a specific serine of apo-ACP by AcpS. This modification is essential for activity because fatty acids are bound in thioester linkage to the sulfhydryl of the prosthetic group.

It localises to the cytoplasm. It participates in lipid metabolism; fatty acid biosynthesis. Functionally, carrier of the growing fatty acid chain in fatty acid biosynthesis. The protein is Acyl carrier protein (acpP) of Acinetobacter calcoaceticus.